Here is a 101-residue protein sequence, read N- to C-terminus: Integration host factor subunit beta (101 aa).

Residues 57-77 (PARAGRNPRTGAHVPVDQKSV) form a disordered region.

This sequence belongs to the bacterial histone-like protein family. As to quaternary structure, heterodimer of an alpha and a beta chain.

Its function is as follows. This protein is one of the two subunits of integration host factor, a specific DNA-binding protein that functions in genetic recombination as well as in transcriptional and translational control. The polypeptide is Integration host factor subunit beta (Rhodopseudomonas palustris (strain HaA2)).